Consider the following 570-residue polypeptide: Periplasmic trehalase (570 aa).

Positions 1–34 are cleaved as a signal peptide; the sequence is MIPPEIRRSVLLQKAIKLALAGTLLTFASFSATA. Substrate is bound by residues arginine 159, 166 to 167, asparagine 203, 212 to 214, 284 to 286, and glycine 317; these read WD, RSQ, and RPE. Catalysis depends on proton donor/acceptor residues aspartate 319 and glutamate 503. Residue glutamate 518 coordinates substrate. Positions 545 to 570 are disordered; the sequence is PCDSVPSTRPASLSATPTKTPSAATQ. Low complexity predominate over residues 554–570; that stretch reads PASLSATPTKTPSAATQ.

It belongs to the glycosyl hydrolase 37 family. Monomer.

The protein resides in the periplasm. The catalysed reaction is alpha,alpha-trehalose + H2O = alpha-D-glucose + beta-D-glucose. In terms of biological role, provides the cells with the ability to utilize trehalose at high osmolarity by splitting it into glucose molecules that can subsequently be taken up by the phosphotransferase-mediated uptake system. The protein is Periplasmic trehalase of Salmonella agona (strain SL483).